Reading from the N-terminus, the 86-residue chain is Large ribosomal subunit protein bL31B (86 aa).

This sequence belongs to the bacterial ribosomal protein bL31 family. Type B subfamily. As to quaternary structure, part of the 50S ribosomal subunit.

The sequence is that of Large ribosomal subunit protein bL31B from Cupriavidus taiwanensis (strain DSM 17343 / BCRC 17206 / CCUG 44338 / CIP 107171 / LMG 19424 / R1) (Ralstonia taiwanensis (strain LMG 19424)).